The sequence spans 99 residues: NADH-quinone oxidoreductase subunit K (99 aa).

3 helical membrane passes run I3 to I23, L28 to F48, and I59 to I79.

Belongs to the complex I subunit 4L family. In terms of assembly, NDH-1 is composed of 14 different subunits. Subunits NuoA, H, J, K, L, M, N constitute the membrane sector of the complex.

Its subcellular location is the cell inner membrane. The enzyme catalyses a quinone + NADH + 5 H(+)(in) = a quinol + NAD(+) + 4 H(+)(out). NDH-1 shuttles electrons from NADH, via FMN and iron-sulfur (Fe-S) centers, to quinones in the respiratory chain. The immediate electron acceptor for the enzyme in this species is believed to be ubiquinone. Couples the redox reaction to proton translocation (for every two electrons transferred, four hydrogen ions are translocated across the cytoplasmic membrane), and thus conserves the redox energy in a proton gradient. The chain is NADH-quinone oxidoreductase subunit K from Protochlamydia amoebophila (strain UWE25).